The following is a 475-amino-acid chain: Protein trichome birefringence-like 6 (475 aa).

The helical; Signal-anchor for type II membrane protein transmembrane segment at 14–34 (VLAFIITIISSAIVFFTFFSS) threads the bilayer. Positions 211-213 (GDS) match the GDS motif motif. The DCXHWCLPGXXDXWN motif signature appears at 450 to 464 (DCSHWCLPGVPDTWN).

It belongs to the PC-esterase family. TBL subfamily.

The protein localises to the membrane. Its function is as follows. May act as a bridging protein that binds pectin and other cell wall polysaccharides. Probably involved in maintaining esterification of pectins. May be involved in the specific O-acetylation of cell wall polymers. This is Protein trichome birefringence-like 6 (TBL6) from Arabidopsis thaliana (Mouse-ear cress).